The sequence spans 519 residues: Probable cytochrome P450 513D1 (519 aa).

A helical transmembrane segment spans residues 1 to 21 (MGISSIIIILFIIVLLKKLIK). Heme is bound at residue cysteine 464.

Belongs to the cytochrome P450 family. Requires heme as cofactor.

Its subcellular location is the membrane. The polypeptide is Probable cytochrome P450 513D1 (cyp513D1) (Dictyostelium discoideum (Social amoeba)).